A 162-amino-acid chain; its full sequence is Glycine cleavage system H protein, mitochondrial (162 aa).

The transit peptide at 1 to 31 (MALRIWASSTANALRLSSATRPHFSPLSRCF) directs the protein to the mitochondrion. A Lipoyl-binding domain is found at 53-135 (VATIGITDHA…YEDGWMIKVK (83 aa)). Lys94 is modified (N6-lipoyllysine).

This sequence belongs to the GcvH family. In terms of assembly, the glycine cleavage system is composed of four proteins: P, T, L and H. (R)-lipoate is required as a cofactor.

It is found in the mitochondrion. Its function is as follows. The glycine cleavage system catalyzes the degradation of glycine. The H protein shuttles the methylamine group of glycine from the P protein to the T protein. This Flaveria pringlei protein is Glycine cleavage system H protein, mitochondrial (GDCSH).